Here is a 435-residue protein sequence, read N- to C-terminus: Methylenetetrahydrofolate--tRNA-(uracil-5-)-methyltransferase TrmFO (435 aa).

10 to 15 lines the FAD pocket; that stretch reads GAGLAG.

It belongs to the MnmG family. TrmFO subfamily. It depends on FAD as a cofactor.

It is found in the cytoplasm. It catalyses the reaction uridine(54) in tRNA + (6R)-5,10-methylene-5,6,7,8-tetrahydrofolate + NADH + H(+) = 5-methyluridine(54) in tRNA + (6S)-5,6,7,8-tetrahydrofolate + NAD(+). The catalysed reaction is uridine(54) in tRNA + (6R)-5,10-methylene-5,6,7,8-tetrahydrofolate + NADPH + H(+) = 5-methyluridine(54) in tRNA + (6S)-5,6,7,8-tetrahydrofolate + NADP(+). Functionally, catalyzes the folate-dependent formation of 5-methyl-uridine at position 54 (M-5-U54) in all tRNAs. This is Methylenetetrahydrofolate--tRNA-(uracil-5-)-methyltransferase TrmFO from Bacillus velezensis (strain DSM 23117 / BGSC 10A6 / LMG 26770 / FZB42) (Bacillus amyloliquefaciens subsp. plantarum).